Consider the following 188-residue polypeptide: dCTP deaminase (188 aa).

DCTP contacts are provided by residues 111–116 (KSTYAR), 135–137 (TLE), Gln156, Tyr170, Lys179, and Gln180. The active-site Proton donor/acceptor is Glu137.

Belongs to the dCTP deaminase family. Homotrimer.

The enzyme catalyses dCTP + H2O + H(+) = dUTP + NH4(+). Its pathway is pyrimidine metabolism; dUMP biosynthesis; dUMP from dCTP (dUTP route): step 1/2. Its function is as follows. Catalyzes the deamination of dCTP to dUTP. This Rickettsia canadensis (strain McKiel) protein is dCTP deaminase.